Reading from the N-terminus, the 512-residue chain is rRNA N(6)-adenosine-methyltransferase ZCCHC4 (512 aa).

The Zn(2+) site is built by Cys39, His41, Cys63, Cys72, Cys124, Cys127, His139, and His142. Residues Cys39–Lys81 form a GRF-type zinc finger. S-adenosyl-L-methionine is bound by residues Gln171–Phe174, Arg201, Asp223, Asn241–Met242, and Asp274. The interval Gln335–Pro355 is regulatory loop. Positions 378, 381, 391, 392, 395, 398, 408, 409, 412, 415, 422, 423, 426, 429, 434, and 436 each coordinate Zn(2+). The 53-residue stretch at Val393–Ile445 folds into the DHHC domain. The CCHC-type zinc-finger motif lies at Asp441–Asn458.

This sequence belongs to the ZCCHC4 family. As to quaternary structure, interacts with components of the ASC-1 complex TRIP4, ASCC1, ASCC2 and ASCC3. Interact with AHCYL1 and AHCYL2. Interact with YTHDC2.

It is found in the cytoplasm. Its subcellular location is the nucleus. The protein resides in the nucleolus. It catalyses the reaction adenosine(4220) in 28S rRNA + S-adenosyl-L-methionine = N(6)-methyladenosine(4220) in 28S rRNA + S-adenosyl-L-homocysteine + H(+). Functionally, rRNA N6-methyltransferase that specifically methylates the adenine in position 4220 of 28S rRNA. N6-methylation of adenine(4220) in 28S rRNA is required for translation. This chain is rRNA N(6)-adenosine-methyltransferase ZCCHC4, found in Mus musculus (Mouse).